The chain runs to 904 residues: Dual specificity tyrosine-phosphorylation-regulated kinase mbk-1 (904 aa).

Disordered stretches follow at residues 1–151 (MNSG…MPPE), 250–272 (TVGR…ASSS), and 285–345 (AVPN…YNNG). Positions 9-23 (NLQAWGQQPSSSYSN) are enriched in polar residues. The segment covering 24–35 (TQQQHGQITGQI) has biased composition (low complexity). A compositionally biased stretch (basic and acidic residues) spans 59–75 (ELEKSKKIAEQPTEHPQ). A compositionally biased stretch (low complexity) spans 112-123 (NNSNSQNFFPQQ). Positions 286 to 297 (VPNTSSSGNQPH) are enriched in polar residues. A Protein kinase domain is found at 367–690 (ILSDTPVGKG…TLFPVSHTAY (324 aa)). ATP is bound by residues 373 to 381 (VGKGSFGQV) and Lys396. The active-site Proton acceptor is the Asp495. Disordered regions lie at residues 717–830 (YRPV…DQAE) and 881–904 (MSHG…NNKL). The segment covering 721–733 (PTSSHPISVTSSF) has biased composition (polar residues). Low complexity predominate over residues 749–820 (SQQNYHNPNY…VQQHSSSSSR (72 aa)). Over residues 881–890 (MSHGNVNAGS) the composition is skewed to polar residues. The span at 892-904 (RDMEKHDYPNNKL) shows a compositional bias: basic and acidic residues.

The protein belongs to the protein kinase superfamily. CMGC Ser/Thr protein kinase family. MNB/DYRK subfamily. Mg(2+) is required as a cofactor.

It is found in the nucleus. It catalyses the reaction L-seryl-[protein] + ATP = O-phospho-L-seryl-[protein] + ADP + H(+). The catalysed reaction is L-threonyl-[protein] + ATP = O-phospho-L-threonyl-[protein] + ADP + H(+). The enzyme catalyses L-tyrosyl-[protein] + ATP = O-phospho-L-tyrosyl-[protein] + ADP + H(+). Possible role in the function of olfactory neurons. The polypeptide is Dual specificity tyrosine-phosphorylation-regulated kinase mbk-1 (Caenorhabditis briggsae).